A 34-amino-acid polypeptide reads, in one-letter code: Jingzhaotoxin F7-10.36 (34 aa).

3 disulfides stabilise this stretch: Cys2–Cys17, Cys9–Cys22, and Cys16–Cys29.

Belongs to the neurotoxin 10 (Hwtx-1) family. 50 (Jztz-F7) subfamily. In terms of tissue distribution, expressed by the venom gland.

The protein resides in the secreted. In terms of biological role, probable ion channel inhibitor. This Chilobrachys guangxiensis (Chinese earth tiger tarantula) protein is Jingzhaotoxin F7-10.36.